Reading from the N-terminus, the 303-residue chain is Porphobilinogen deaminase (303 aa).

Position 240 is an S-(dipyrrolylmethanemethyl)cysteine (Cys240).

Belongs to the HMBS family. In terms of assembly, monomer. Requires dipyrromethane as cofactor.

The catalysed reaction is 4 porphobilinogen + H2O = hydroxymethylbilane + 4 NH4(+). It functions in the pathway porphyrin-containing compound metabolism; protoporphyrin-IX biosynthesis; coproporphyrinogen-III from 5-aminolevulinate: step 2/4. In terms of biological role, tetrapolymerization of the monopyrrole PBG into the hydroxymethylbilane pre-uroporphyrinogen in several discrete steps. This is Porphobilinogen deaminase from Stenotrophomonas maltophilia (strain K279a).